The following is a 207-amino-acid chain: MARYIGPKAKLSRREGTDLFLKSARRSLADKCKLDSKPGQHGRISGARTSDYGTQLREKQKVKRIYGVLERQFRRYFAEADRRKGNTGETLLQLLESRLDNVVYRMGFGSTRAEARQLVSHKAVTVNGIVANIPSQQVKAGDVVAIREKAKKQARIVEALSLAEQGGMPSWVAVDAKKFEGTFKQVPERADIAGDINESLIVELYSR.

Positions 97 to 160 (SRLDNVVYRM…KKQARIVEAL (64 aa)) constitute an S4 RNA-binding domain.

Belongs to the universal ribosomal protein uS4 family. In terms of assembly, part of the 30S ribosomal subunit. Contacts protein S5. The interaction surface between S4 and S5 is involved in control of translational fidelity.

Its function is as follows. One of the primary rRNA binding proteins, it binds directly to 16S rRNA where it nucleates assembly of the body of the 30S subunit. With S5 and S12 plays an important role in translational accuracy. The polypeptide is Small ribosomal subunit protein uS4 (Burkholderia pseudomallei (strain 1106a)).